A 296-amino-acid polypeptide reads, in one-letter code: MKNPSLRQKLEAYYRLTRLDKPIGILLLLWPTLWGIWLASPGWPDGLVLFVFIAGTVLMRSAGCVMNDLADRNFDGHVERTRQRPLVTGDVTTKEAVLLALALSLVAFILVLQLNPLVVALSFPALFLAASYPLTKRFLSIPQAYLGIAFGFGIPMAFAAITGQLPLEAWILLLANVFWAIAYDTEYAMVDRNDDLNIGIRSSAIFFGRLDVFAVMACYGAFLILMAWVGVRLQQSWPYFAGLGVAALVALYHYALIRDRDRQSCFKAFLHNNWLGAAIFVGVLASDYFRSSILSI.

A run of 8 helical transmembrane segments spans residues 23–43, 46–66, 99–119, 141–161, 163–183, 211–231, 237–257, and 265–285; these read IGIL…SPGW, GLVL…GCVM, LALA…PLVV, IPQA…FAAI, GQLP…AIAY, DVFA…WVGV, WPYF…YALI, and CFKA…GVLA.

This sequence belongs to the UbiA prenyltransferase family. Mg(2+) serves as cofactor.

Its subcellular location is the cell inner membrane. The enzyme catalyses all-trans-octaprenyl diphosphate + 4-hydroxybenzoate = 4-hydroxy-3-(all-trans-octaprenyl)benzoate + diphosphate. Its pathway is cofactor biosynthesis; ubiquinone biosynthesis. Catalyzes the prenylation of para-hydroxybenzoate (PHB) with an all-trans polyprenyl group. Mediates the second step in the final reaction sequence of ubiquinone-8 (UQ-8) biosynthesis, which is the condensation of the polyisoprenoid side chain with PHB, generating the first membrane-bound Q intermediate 3-octaprenyl-4-hydroxybenzoate. The protein is 4-hydroxybenzoate octaprenyltransferase of Methylobacillus flagellatus (strain ATCC 51484 / DSM 6875 / VKM B-1610 / KT).